The primary structure comprises 1239 residues: DNA topoisomerase 2 (1239 aa).

Residues Asn65, Asn96, 124-126, 137-144, and 354-356 each bind ATP; these read SSN, GRHGYGAK, and QSK. One can recognise a Toprim domain in the interval 434-548; the sequence is RTLIVTEGDS…SLLQHNPGYI (115 aa). Mg(2+) is bound by residues Glu440, Asp517, and Asp519. In terms of domain architecture, Topo IIA-type catalytic spans 685–1101; that stretch reads IPHCVDGLKP…TPVKMWLTDL (417 aa). The O-(5'-phospho-DNA)-tyrosine intermediate role is filled by Tyr775. Residues 956–965 are interaction with DNA; that stretch reads ALSQRIYING. The disordered stretch occupies residues 1167–1206; sequence PASKRKPEDTYGGALSSGGSTRNVGKRLTGARGAKKKKVV.

It belongs to the type II topoisomerase family. Homodimer. Requires Mg(2+) as cofactor. Mn(2+) serves as cofactor. It depends on Ca(2+) as a cofactor.

The protein resides in the nucleus. It is found in the mitochondrion matrix. The protein localises to the kinetoplast. The catalysed reaction is ATP-dependent breakage, passage and rejoining of double-stranded DNA.. Control of topological states of DNA by transient breakage and subsequent rejoining of DNA strands. Topoisomerase II makes double-strand breaks. This is DNA topoisomerase 2 (TOP2) from Crithidia fasciculata.